Consider the following 510-residue polypeptide: Serine carboxypeptidase-like 48 (510 aa).

The first 25 residues, 1 to 25 (MDSKTTFLTFLLCIFIFSHFSPSTS), serve as a signal peptide directing secretion. Intrachain disulfides connect Cys-141/Cys-383, Cys-309/Cys-326, and Cys-349/Cys-354. Residues Asn-158 and Asn-159 are each glycosylated (N-linked (GlcNAc...) asparagine). The active site involves Ser-231. Residues Asp-421 and His-478 contribute to the active site.

The protein belongs to the peptidase S10 family. As to expression, ubiquitous.

The protein localises to the secreted. Probable carboxypeptidase. The chain is Serine carboxypeptidase-like 48 (SCPL48) from Arabidopsis thaliana (Mouse-ear cress).